Consider the following 308-residue polypeptide: Growth/differentiation factor 15 (308 aa).

The signal sequence occupies residues 1–29 (MPGQELKTLNGSQMLLVLLVLLWPPHGGA). Positions 30–192 (VSLAEASRAS…HLRPRASRGR (163 aa)) are excised as a propeptide. Asparagine 70 carries N-linked (GlcNAc...) asparagine glycosylation. Residues 152–179 (APALHLRLSPPPSQSDQLLVKSSSSRPQ) form a disordered region. Over residues 165 to 178 (QSDQLLVKSSSSRP) the composition is skewed to polar residues. Intrachain disulfides connect cysteine 203–cysteine 210, cysteine 211–cysteine 274, cysteine 240–cysteine 305, and cysteine 244–cysteine 307.

This sequence belongs to the TGF-beta family. In terms of assembly, homodimer; disulfide-linked. Interacts with GFRAL and RET; ligand of GFRAL, which mediates GDF15 internalization and cellular signaling through interaction with RET via the formation of a 2:2:2 ternary complex composed of GDF15, GFRAL and RET. As to expression, detected in plasma (at protein level).

The protein resides in the secreted. Its function is as follows. Hormone produced in response to various stresses to confer information about those stresses to the brain, and trigger an aversive response, characterized by nausea and/or loss of appetite. The aversive response is both required to reduce continuing exposure to those stresses at the time of exposure and to promote avoidance behavior in the future. Acts by binding to its receptor, GFRAL, activating GFRAL-expressing neurons localized in the area postrema and nucleus tractus solitarius of the brainstem. It then triggers the activation of neurons localized within the parabrachial nucleus and central amygdala, which constitutes part of the 'emergency circuit' that shapes responses to stressful conditions. The GDF15-GFRAL signal induces expression of genes involved in metabolism, such as lipid metabolism in adipose tissues. Required for avoidance behavior in response to food allergens: induced downstream of mast cell activation to promote aversion and minimize harmful effects of exposure to noxious substances. In addition to suppress appetite, also promotes weight loss by enhancing energy expenditure in muscle: acts by increasing calcium futile cycling in muscle. Contributes to the effect of metformin, an anti-diabetic drug, on appetite reduction and weight loss: produced in the kidney in response to metformin treatment, thereby activating the GDF15-GFRAL response, leading to reduced appetite and weight. Produced in response to anticancer drugs, such as camptothecin or cisplatin, promoting nausea and contributing to malnutrition. Overproduced in many cancers, promoting anorexia in cancer (cachexia). Responsible for the risk of nausea during pregnancy: high levels of GDF15 during pregnancy, mostly originating from embryos, are associated with increased nausea. Maternal sensitivity to nausea is probably determined by pre-pregnancy exposure to GDF15, females with naturally high level of GDF15 being less susceptible to nausea than females with low levels of GDF15 before pregnancy. Promotes metabolic adaptation in response to systemic inflammation caused by bacterial and viral infections in order to promote tissue tolerance and prevent tissue damage. Inhibits growth hormone signaling on hepatocytes. The protein is Growth/differentiation factor 15 of Macaca fascicularis (Crab-eating macaque).